A 274-amino-acid chain; its full sequence is 4-diphosphocytidyl-2-C-methyl-D-erythritol kinase (274 aa).

Lysine 8 is a catalytic residue. ATP is bound at residue 92–102; it reads PSGAGLGGGSS. Residue aspartate 134 is part of the active site.

This sequence belongs to the GHMP kinase family. IspE subfamily.

It catalyses the reaction 4-CDP-2-C-methyl-D-erythritol + ATP = 4-CDP-2-C-methyl-D-erythritol 2-phosphate + ADP + H(+). The protein operates within isoprenoid biosynthesis; isopentenyl diphosphate biosynthesis via DXP pathway; isopentenyl diphosphate from 1-deoxy-D-xylulose 5-phosphate: step 3/6. Catalyzes the phosphorylation of the position 2 hydroxy group of 4-diphosphocytidyl-2C-methyl-D-erythritol. This is 4-diphosphocytidyl-2-C-methyl-D-erythritol kinase from Porphyromonas gingivalis (strain ATCC 33277 / DSM 20709 / CIP 103683 / JCM 12257 / NCTC 11834 / 2561).